Consider the following 88-residue polypeptide: SPbeta prophage-derived protein BhlB (88 aa).

A run of 2 helical transmembrane segments spans residues Leu15–Ile35 and Asp45–Phe65.

The protein belongs to the SPP1 holin family.

The protein resides in the cell membrane. In terms of biological role, may be involved in the secretion of the autolysin BlyA. The protein is SPbeta prophage-derived protein BhlB (bhlB) of Bacillus subtilis (strain 168).